Consider the following 296-residue polypeptide: Elongation factor Ts (296 aa).

The involved in Mg(2+) ion dislocation from EF-Tu stretch occupies residues 82–85 (TDFV).

The protein belongs to the EF-Ts family.

It localises to the cytoplasm. Functionally, associates with the EF-Tu.GDP complex and induces the exchange of GDP to GTP. It remains bound to the aminoacyl-tRNA.EF-Tu.GTP complex up to the GTP hydrolysis stage on the ribosome. This Coxiella burnetii (strain CbuK_Q154) (Coxiella burnetii (strain Q154)) protein is Elongation factor Ts.